A 338-amino-acid polypeptide reads, in one-letter code: Phenylalanine--tRNA ligase alpha subunit (338 aa).

Mg(2+) is bound at residue Glu-253.

It belongs to the class-II aminoacyl-tRNA synthetase family. Phe-tRNA synthetase alpha subunit type 1 subfamily. Tetramer of two alpha and two beta subunits. Mg(2+) is required as a cofactor.

Its subcellular location is the cytoplasm. The enzyme catalyses tRNA(Phe) + L-phenylalanine + ATP = L-phenylalanyl-tRNA(Phe) + AMP + diphosphate + H(+). This chain is Phenylalanine--tRNA ligase alpha subunit, found in Syntrophotalea carbinolica (strain DSM 2380 / NBRC 103641 / GraBd1) (Pelobacter carbinolicus).